The sequence spans 122 residues: UPF0102 protein BARBAKC583_1042 (122 aa).

Belongs to the UPF0102 family.

This chain is UPF0102 protein BARBAKC583_1042, found in Bartonella bacilliformis (strain ATCC 35685 / KC583 / Herrer 020/F12,63).